A 161-amino-acid chain; its full sequence is Endoribonuclease YbeY (161 aa).

Residues His127, His131, and His137 each contribute to the Zn(2+) site.

This sequence belongs to the endoribonuclease YbeY family. The cofactor is Zn(2+).

Its subcellular location is the cytoplasm. In terms of biological role, single strand-specific metallo-endoribonuclease involved in late-stage 70S ribosome quality control and in maturation of the 3' terminus of the 16S rRNA. The polypeptide is Endoribonuclease YbeY (Listeria innocua serovar 6a (strain ATCC BAA-680 / CLIP 11262)).